Consider the following 327-residue polypeptide: Phenylalanine--tRNA ligase alpha subunit (327 aa).

Mg(2+) is bound at residue Glu-252.

It belongs to the class-II aminoacyl-tRNA synthetase family. Phe-tRNA synthetase alpha subunit type 1 subfamily. As to quaternary structure, tetramer of two alpha and two beta subunits. Mg(2+) is required as a cofactor.

Its subcellular location is the cytoplasm. The catalysed reaction is tRNA(Phe) + L-phenylalanine + ATP = L-phenylalanyl-tRNA(Phe) + AMP + diphosphate + H(+). This Vibrio vulnificus (strain CMCP6) protein is Phenylalanine--tRNA ligase alpha subunit.